The primary structure comprises 76 residues: Cytochrome c oxidase subunit 6C-1 (76 aa).

At 2–10 (SLAKPAMRG) the chain is on the mitochondrial matrix side. The chain crosses the membrane as a helical span at residues 11–51 (LLGKRLRFHLPIAFTLSLVAALGFKYGVTEPRKQAYADFYK). Residues 52 to 76 (QYDAVKDFNAMREAGIFESVRPSGE) are Mitochondrial intermembrane-facing.

Belongs to the cytochrome c oxidase subunit 6c family. Component of the cytochrome c oxidase (complex IV, CIV), a multisubunit enzyme composed of 14 subunits. The complex is composed of a catalytic core of 3 subunits MT-CO1, MT-CO2 and MT-CO3, encoded in the mitochondrial DNA, and 11 supernumerary subunits COX4I, COX5A, COX5B, COX6A, COX6B, COX6C, COX7A, COX7B, COX7C, COX8 and NDUFA4, which are encoded in the nuclear genome. The complex exists as a monomer or a dimer and forms supercomplexes (SCs) in the inner mitochondrial membrane with NADH-ubiquinone oxidoreductase (complex I, CI) and ubiquinol-cytochrome c oxidoreductase (cytochrome b-c1 complex, complex III, CIII), resulting in different assemblies (supercomplex SCI(1)III(2)IV(1) and megacomplex MCI(2)III(2)IV(2)).

It localises to the mitochondrion inner membrane. It participates in energy metabolism; oxidative phosphorylation. Functionally, component of the cytochrome c oxidase, the last enzyme in the mitochondrial electron transport chain which drives oxidative phosphorylation. The respiratory chain contains 3 multisubunit complexes succinate dehydrogenase (complex II, CII), ubiquinol-cytochrome c oxidoreductase (cytochrome b-c1 complex, complex III, CIII) and cytochrome c oxidase (complex IV, CIV), that cooperate to transfer electrons derived from NADH and succinate to molecular oxygen, creating an electrochemical gradient over the inner membrane that drives transmembrane transport and the ATP synthase. Cytochrome c oxidase is the component of the respiratory chain that catalyzes the reduction of oxygen to water. Electrons originating from reduced cytochrome c in the intermembrane space (IMS) are transferred via the dinuclear copper A center (CU(A)) of subunit 2 and heme A of subunit 1 to the active site in subunit 1, a binuclear center (BNC) formed by heme A3 and copper B (CU(B)). The BNC reduces molecular oxygen to 2 water molecules using 4 electrons from cytochrome c in the IMS and 4 protons from the mitochondrial matrix. This is Cytochrome c oxidase subunit 6C-1 from Thunnus obesus (Bigeye tuna).